The sequence spans 10061 residues: MATH and LRR domain-containing protein PFE0570w (10061 aa).

Disordered regions lie at residues 166–210, 244–471, and 1004–1170; these read DMDN…EKKN, NNSD…NDIN, and DDQK…DTSF. Over residues 169-179 the composition is skewed to polar residues; sequence NNPNNHVSNNG. The segment covering 193–205 has biased composition (low complexity); the sequence is TSNSIHKNNNTNI. The span at 270 to 282 shows a compositional bias: basic and acidic residues; it reads KKSDNNNDKKNDD. Residues 285–320 show a composition bias toward low complexity; sequence NNNNNNNNNNNNNNNNNDNHVCTSNNQPNTINKQNN. Positions 328–338 are enriched in polar residues; the sequence is DQNGRTKITPQ. A coiled-coil region spans residues 338-366; sequence QNVNQKEKEIKNVVKEKNNFNREEKDITN. A compositionally biased stretch (basic and acidic residues) spans 342–365; that stretch reads QKEKEIKNVVKEKNNFNREEKDIT. Over residues 366–375 the composition is skewed to acidic residues; that stretch reads NSDDYDENST. Composition is skewed to polar residues over residues 376 to 389 and 421 to 437; these read DESC…TSSE and VPSN…SAEN. Residues 431-469 are a coiled coil; sequence NVKSAENCNKEKKKKKKKKKKELNNDNKDNTLNNETMND. A compositionally biased stretch (basic residues) spans 441-451; that stretch reads EKKKKKKKKKK. Positions 460-471 are enriched in low complexity; it reads NTLNNETMNDIN. The span at 1025-1037 shows a compositional bias: basic and acidic residues; the sequence is NEEKPNVNKEGNI. A compositionally biased stretch (low complexity) spans 1047-1057; sequence NKNKNNNNNNN. Residues 1058 to 1132 show a composition bias toward basic and acidic residues; the sequence is DKNDKNDKND…KKKKNGKEQN (75 aa). Residues 1133–1165 show a composition bias toward acidic residues; the sequence is EDSTESDDESSVIDDNYIDDDSCDCDSESDSID. The region spanning 1328-1458 is the MATH domain; sequence NGKIELYIPN…SGGLLIKGKV (131 aa). Positions 1651-1698 are disordered; it reads GGNLQNEQKGDEDVKKEDVKKENVNKEEIKNGNNNNNNDENENEVDDN. The span at 1658 to 1680 shows a compositional bias: basic and acidic residues; sequence QKGDEDVKKEDVKKENVNKEEIK. Residues 1916 to 1948 adopt a coiled-coil conformation; it reads NYLSNLNKVKININDLNNNIVDVNNSIHNIEKE. Residues 1973–1995 are compositionally biased toward basic and acidic residues; sequence HKETSSIQNKGKEKSNNNIKSDD. Disordered stretches follow at residues 1973-1998, 2155-2245, 2427-2566, and 3120-3139; these read HKET…DNNN, LNKS…PSYK, YSDD…NNIK, and SNET…NEMK. Positions 2216–2228 are enriched in acidic residues; it reads NNDDKDDDDDDSY. A compositionally biased stretch (basic and acidic residues) spans 2235 to 2245; the sequence is SDGKKNDPSYK. Positions 2475–2484 are enriched in low complexity; the sequence is NNNNNNNNMM. 2 stretches are compositionally biased toward basic and acidic residues: residues 2487-2496 and 2505-2527; these read DDNKVNKNEE and QIKE…RNED. Low complexity-rich tracts occupy residues 2552–2564 and 3121–3133; these read NNNN…NNNN and NETN…NRTN. Residues 2555–2580 are a coiled coil; sequence NNNNNNNNNNIKRLDDSYNKLLKNKN. A helical membrane pass occupies residues 3398 to 3418; sequence KLILKKIFMYLNIICMIIKYI. Disordered stretches follow at residues 3802–3826, 3847–3890, and 3919–3953; these read STND…YSKK, LTSG…DNNN, and ESND…EKKS. Over residues 3809–3822 the composition is skewed to basic and acidic residues; that stretch reads VDRSDDSESNDDKK. Residues 3851-3890 are compositionally biased toward low complexity; the sequence is NSSSKNSKKNSNNESIQMDNTNNSNSNNNNKNDNNNDNNN. Residues 3926-3941 show a composition bias toward polar residues; that stretch reads KNQNIQSNEQSVTPNR. A compositionally biased stretch (basic and acidic residues) spans 3942 to 3953; sequence NIEENKDHEKKS. Residues 3977–4001 are a coiled coil; sequence EHLGNATAVLNILQKKLENEELKKL. Residues 4039–4065 are compositionally biased toward basic and acidic residues; sequence VSAHKEKNVKTDSSDDKKKKEDNENNN. Disordered regions lie at residues 4039-4074, 4155-4180, 4352-4414, 4919-4943, 4991-5030, and 5179-5207; these read VSAH…IIHN, KGNN…NNMG, SNNN…NNNN, NKRK…DNDN, DGLN…KNEK, and SKIA…KSNL. A compositionally biased stretch (low complexity) spans 4157–4178; the sequence is NNSKDNNNNNNNNNNNNNNKNN. Residues 4399 to 4424 adopt a coiled-coil conformation; it reads NNNNNNNNNNNNNNNNVNKEIIKLNS. 3 stretches are compositionally biased toward low complexity: residues 4929 to 4943, 5004 to 5019, and 5185 to 5202; these read NNNN…DNDN, NMNN…NNSN, and NGNN…NNNN. Residues 5006–5046 are a coiled coil; the sequence is NNVKNKNNNNNNSNNKRKKNEKNEKIDKIEQFLHESELEKD. Coiled coils occupy residues 5486 to 5563, 5728 to 5810, and 5900 to 6022; these read NNNN…NIYE, DVLK…DKEE, and MNND…INNY. Basic and acidic residues-rich tracts occupy residues 5716–5732, 5738–5811, and 5909–5953; these read KDAK…VLKD, SNKE…KEEP, and NKNK…KKDN. 7 disordered regions span residues 5716-5816, 5892-6009, 6123-6142, 6299-6338, 6722-6760, 7585-7730, and 7744-7787; these read KDAK…QINE, EIIN…KKLK, KSET…VDGK, NDSI…DKGE, NMNN…NNNI, EDML…VEEK, and DLLS…KKSS. A compositionally biased stretch (low complexity) spans 5954 to 5968; it reads NNSNNNNNNNNLSNN. Positions 5969–5978 are enriched in acidic residues; the sequence is GEEDPNDSDS. Residues 5991–6003 show a composition bias toward basic and acidic residues; that stretch reads NKNINDDSDDNNK. A compositionally biased stretch (polar residues) spans 6129-6138; it reads SNKNVESNDN. 2 stretches are compositionally biased toward low complexity: residues 6314–6333 and 6722–6759; these read SNSN…NNNN and NMNN…NNNN. A coiled-coil region spans residues 6719–6743; sequence NMNNMNNNNNNNNNNNNNNNNNNNN. A compositionally biased stretch (basic and acidic residues) spans 7585 to 7599; the sequence is EDMLHSKKTDVIQHG. The span at 7600 to 7685 shows a compositional bias: acidic residues; the sequence is DEEEDDEEDD…EHINEEEQED (86 aa). 4 coiled-coil regions span residues 7601-7637, 7710-7813, 7934-7961, and 8217-8241; these read EEED…DIED, NTKI…NKNE, KTDE…IDNE, and NINN…GKRE. Positions 7749 to 7765 are enriched in basic residues; sequence SKKKNHKDKRNASKNKN. The segment covering 7766-7786 has biased composition (basic and acidic residues); it reads KNKDILKKNENNINDEKEKKS. 3 disordered regions span residues 8189–8252, 8293–8380, and 8474–8497; these read ETGG…GGEE, GKVS…IIMS, and KKKN…MDEE. The span at 8218–8242 shows a compositional bias: basic and acidic residues; it reads INNKEKETNKNEEQQQGEAEGKREG. A compositionally biased stretch (acidic residues) spans 8243–8252; that stretch reads EGEEGEGGEE. Basic and acidic residues predominate over residues 8305–8314; sequence LLNDKEHEKD. The segment covering 8315 to 8363 has biased composition (acidic residues); that stretch reads NEDNDEDNDEDDDDEDDDEDDEDDDDDDDDDDDDDDDDDYDEDYDEDYD. Basic and acidic residues predominate over residues 8364–8374; that stretch reads EKLVENKKNER. Over residues 8478-8492 the composition is skewed to low complexity; sequence YSNNNIYNNNSSNKV. Coiled coils occupy residues 8644 to 8697, 8882 to 8907, and 9219 to 9247; these read SETL…ELNN, QYLE…VDNY, and IDMK…SNNN. Disordered regions lie at residues 9759–9779, 9891–9926, and 9985–10061; these read TIPR…NNNS, SNTS…SSSN, and KNNS…NNIY. Low complexity-rich tracts occupy residues 9764 to 9779, 9899 to 9926, and 9986 to 10022; these read NTTT…NNNS, NSSN…SSSN, and NNSI…NNNT. Residues 10031–10041 are compositionally biased toward polar residues; the sequence is IFQQNQNHSDT. Residues 10042–10061 show a composition bias toward low complexity; sequence NNNNNNNNKNNSNNNNNNIY.

The protein localises to the membrane. This is MATH and LRR domain-containing protein PFE0570w from Plasmodium falciparum (isolate 3D7).